Here is a 140-residue protein sequence, read N- to C-terminus: Ctenidin-1 (140 aa).

Residues 1–19 (MKHLIPLIVMASVVLAVYA) form the signal peptide. Residue Gly-138 is modified to Glycine amide.

The protein belongs to the glycine-rich peptide family. In terms of tissue distribution, expressed in hemocytes (at protein level).

The protein localises to the secreted. Functionally, antimicrobial protein with bacteriostatic activity against the Gram-negative bacterium E.coli, and very weak activity against the Gram-positive bacterium S.aureus. Lacks activity against the yeast C.albicans. This is Ctenidin-1 from Cupiennius salei (American wandering spider).